Here is a 25-residue protein sequence, read N- to C-terminus: Neuromedin-U-25 (25 aa).

Position 25 is an asparagine amide (asparagine 25).

It belongs to the NmU family.

The protein localises to the secreted. Stimulates uterine smooth muscle contraction and causes selective vasoconstriction. The polypeptide is Neuromedin-U-25 (NMU) (Gallus gallus (Chicken)).